An 87-amino-acid polypeptide reads, in one-letter code: MANIKQQKKRVLTNEIARKRNQAIRSRLRTETRKFNAAVEAGDKEAAEAQLRVASRFYDKAVTKGTIHRNNAANKKSGMAARFNKMA.

Belongs to the bacterial ribosomal protein bS20 family.

Binds directly to 16S ribosomal RNA. This is Small ribosomal subunit protein bS20 from Corynebacterium jeikeium (strain K411).